The primary structure comprises 153 residues: Subtilisin propeptide-like protein (153 aa).

A signal peptide spans 1 to 27 (MKFLFAFNFFSLYIYLYEFLCIHLCGS). The segment at 127 to 153 (QISHLSEFIQYLLNKNVCIEFNQNVML) is dispensable for parasite growth in host erythrocytes.

The protein localises to the secreted. The protein resides in the parasitophorous vacuole lumen. It localises to the cell membrane. Functionally, acts as a specific inhibitor of subtilisin-like protease SUB1. The sequence is that of Subtilisin propeptide-like protein from Plasmodium falciparum (isolate 3D7).